Consider the following 358-residue polypeptide: Heme A synthase (358 aa).

8 consecutive transmembrane segments (helical) span residues 25-45 (LVRY…MVGG), 111-131 (LLAR…WLTG), 141-161 (MLGL…MVAS), 176-196 (IHLT…RGLV), 210-230 (FAGW…LVAG), 269-289 (VQFV…LHAV), 304-324 (TIVL…TLLM), and 326-346 (APLH…AFAV). Residue H273 coordinates heme. Heme is bound at residue H334.

It belongs to the COX15/CtaA family. Type 2 subfamily. Interacts with CtaB. Heme b is required as a cofactor.

Its subcellular location is the cell membrane. It carries out the reaction Fe(II)-heme o + 2 A + H2O = Fe(II)-heme a + 2 AH2. It participates in porphyrin-containing compound metabolism; heme A biosynthesis; heme A from heme O: step 1/1. Catalyzes the conversion of heme O to heme A by two successive hydroxylations of the methyl group at C8. The first hydroxylation forms heme I, the second hydroxylation results in an unstable dihydroxymethyl group, which spontaneously dehydrates, resulting in the formyl group of heme A. This chain is Heme A synthase, found in Brucella abortus (strain S19).